We begin with the raw amino-acid sequence, 90 residues long: Putative membrane protein insertion efficiency factor (90 aa).

The protein belongs to the UPF0161 family.

Its subcellular location is the cell inner membrane. Could be involved in insertion of integral membrane proteins into the membrane. This chain is Putative membrane protein insertion efficiency factor, found in Bordetella bronchiseptica (strain ATCC BAA-588 / NCTC 13252 / RB50) (Alcaligenes bronchisepticus).